Here is a 207-residue protein sequence, read N- to C-terminus: 3-demethoxyubiquinol 3-hydroxylase (207 aa).

Residues Glu-56, Glu-86, His-89, Glu-138, Glu-170, and His-173 each contribute to the Fe cation site.

Belongs to the COQ7 family. Fe cation serves as cofactor.

The protein localises to the cell membrane. The catalysed reaction is a 5-methoxy-2-methyl-3-(all-trans-polyprenyl)benzene-1,4-diol + AH2 + O2 = a 3-demethylubiquinol + A + H2O. Its pathway is cofactor biosynthesis; ubiquinone biosynthesis. Its function is as follows. Catalyzes the hydroxylation of 2-nonaprenyl-3-methyl-6-methoxy-1,4-benzoquinol during ubiquinone biosynthesis. The chain is 3-demethoxyubiquinol 3-hydroxylase from Cupriavidus necator (strain ATCC 17699 / DSM 428 / KCTC 22496 / NCIMB 10442 / H16 / Stanier 337) (Ralstonia eutropha).